The primary structure comprises 100 residues: Cobalt transport protein CbiN (100 aa).

2 helical membrane passes run 8–28 and 69–89; these read LSNWLLIGGVIALAVLPLIFV and LLFSSQAALGAGIIGYAVGLY.

This sequence belongs to the CbiN family. In terms of assembly, forms an energy-coupling factor (ECF) transporter complex composed of an ATP-binding protein (A component, CbiO), a transmembrane protein (T component, CbiQ) and 2 possible substrate-capture proteins (S components, CbiM and CbiN) of unknown stoichimetry.

It is found in the cell inner membrane. It functions in the pathway cofactor biosynthesis; adenosylcobalamin biosynthesis. Functionally, part of the energy-coupling factor (ECF) transporter complex CbiMNOQ involved in cobalt import. In Nostoc sp. (strain PCC 7120 / SAG 25.82 / UTEX 2576), this protein is Cobalt transport protein CbiN.